A 290-amino-acid chain; its full sequence is tRNA dimethylallyltransferase (290 aa).

9 to 16 (GPTASGKT) provides a ligand contact to ATP. 11–16 (TASGKT) contacts substrate. Residues 34-37 (DSTQ) are interaction with substrate tRNA.

The protein belongs to the IPP transferase family. As to quaternary structure, monomer. The cofactor is Mg(2+).

It catalyses the reaction adenosine(37) in tRNA + dimethylallyl diphosphate = N(6)-dimethylallyladenosine(37) in tRNA + diphosphate. In terms of biological role, catalyzes the transfer of a dimethylallyl group onto the adenine at position 37 in tRNAs that read codons beginning with uridine, leading to the formation of N6-(dimethylallyl)adenosine (i(6)A). This is tRNA dimethylallyltransferase from Phytoplasma australiense.